Here is a 218-residue protein sequence, read N- to C-terminus: Outer-membrane lipoprotein LolB (218 aa).

Residues 1-24 form the signal peptide; the sequence is MNNLSYLTKIPLIWVLLSVTLLSA. C25 carries N-palmitoyl cysteine lipidation. C25 carries the S-diacylglycerol cysteine lipid modification.

This sequence belongs to the LolB family. As to quaternary structure, monomer.

The protein resides in the cell outer membrane. In terms of biological role, plays a critical role in the incorporation of lipoproteins in the outer membrane after they are released by the LolA protein. This Shewanella sediminis (strain HAW-EB3) protein is Outer-membrane lipoprotein LolB.